A 65-amino-acid polypeptide reads, in one-letter code: Small ribosomal subunit protein bS21 (65 aa).

Residues 44 to 65 are disordered; it reads DDRLKRSRGKRRAQRANEERNS. Residues 48-57 show a composition bias toward basic residues; that stretch reads KRSRGKRRAQ.

Belongs to the bacterial ribosomal protein bS21 family.

This Prosthecochloris aestuarii (strain DSM 271 / SK 413) protein is Small ribosomal subunit protein bS21.